A 421-amino-acid polypeptide reads, in one-letter code: Elongation factor 1-alpha (421 aa).

In terms of domain architecture, tr-type G spans 4 to 220 (NRHQNLAVIG…NGLPVPQPPT (217 aa)). The G1 stretch occupies residues 13 to 20 (GHVDHGKS). A GTP-binding site is contributed by 13 to 20 (GHVDHGKS). S20 contacts Mg(2+). The tract at residues 69–73 (GVTID) is G2. The segment at 90–93 (DCPG) is G3. Residues 90 to 94 (DCPGH) and 145 to 148 (NKMD) contribute to the GTP site. The interval 145 to 148 (NKMD) is G4. Residues 184–186 (SAF) form a G5 region.

It belongs to the TRAFAC class translation factor GTPase superfamily. Classic translation factor GTPase family. EF-Tu/EF-1A subfamily.

Its subcellular location is the cytoplasm. The catalysed reaction is GTP + H2O = GDP + phosphate + H(+). GTP hydrolase that promotes the GTP-dependent binding of aminoacyl-tRNA to the A-site of ribosomes during protein biosynthesis. In Halobacterium salinarum (strain ATCC 700922 / JCM 11081 / NRC-1) (Halobacterium halobium), this protein is Elongation factor 1-alpha.